A 159-amino-acid polypeptide reads, in one-letter code: NADH-quinone oxidoreductase subunit B (159 aa).

[4Fe-4S] cluster contacts are provided by Cys32, Cys33, Cys97, and Cys126.

It belongs to the complex I 20 kDa subunit family. NDH-1 is composed of 14 different subunits. Subunits NuoB, C, D, E, F, and G constitute the peripheral sector of the complex. It depends on [4Fe-4S] cluster as a cofactor.

It localises to the cell inner membrane. The catalysed reaction is a quinone + NADH + 5 H(+)(in) = a quinol + NAD(+) + 4 H(+)(out). Its function is as follows. NDH-1 shuttles electrons from NADH, via FMN and iron-sulfur (Fe-S) centers, to quinones in the respiratory chain. The immediate electron acceptor for the enzyme in this species is believed to be ubiquinone. Couples the redox reaction to proton translocation (for every two electrons transferred, four hydrogen ions are translocated across the cytoplasmic membrane), and thus conserves the redox energy in a proton gradient. The sequence is that of NADH-quinone oxidoreductase subunit B from Helicobacter pylori (strain P12).